Here is a 234-residue protein sequence, read N- to C-terminus: Proteasome subunit alpha type-2 (234 aa).

A2 bears the N-acetylalanine mark. Position 6 is a phosphotyrosine (Y6). Residues S7, S14, and S16 each carry the phosphoserine modification. A Phosphotyrosine modification is found at Y24. K70 bears the N6-acetyllysine mark. Phosphotyrosine is present on residues Y76 and Y121. At K171 the chain carries N6-acetyllysine.

It belongs to the peptidase T1A family. In terms of assembly, the 26S proteasome consists of a 20S proteasome core and two 19S regulatory subunits. The 20S proteasome core is a barrel-shaped complex made of 28 subunits that are arranged in four stacked rings. The two outer rings are each formed by seven alpha subunits, and the two inner rings are formed by seven beta subunits. The proteolytic activity is exerted by three beta-subunits PSMB5, PSMB6 and PSMB7. Phosphorylated on tyrosine residues; which may be important for nuclear import. As to expression, detected in liver (at protein level).

Its subcellular location is the cytoplasm. It is found in the nucleus. Component of the 20S core proteasome complex involved in the proteolytic degradation of most intracellular proteins. This complex plays numerous essential roles within the cell by associating with different regulatory particles. Associated with two 19S regulatory particles, forms the 26S proteasome and thus participates in the ATP-dependent degradation of ubiquitinated proteins. The 26S proteasome plays a key role in the maintenance of protein homeostasis by removing misfolded or damaged proteins that could impair cellular functions, and by removing proteins whose functions are no longer required. Associated with the PA200 or PA28, the 20S proteasome mediates ubiquitin-independent protein degradation. This type of proteolysis is required in several pathways including spermatogenesis (20S-PA200 complex) or generation of a subset of MHC class I-presented antigenic peptides (20S-PA28 complex). The chain is Proteasome subunit alpha type-2 (Psma2) from Mus musculus (Mouse).